The sequence spans 178 residues: ATP-dependent protease subunit HslV (178 aa).

The active site involves Thr7. Na(+) is bound by residues Gly162, Cys165, and Thr168.

It belongs to the peptidase T1B family. HslV subfamily. A double ring-shaped homohexamer of HslV is capped on each side by a ring-shaped HslU homohexamer. The assembly of the HslU/HslV complex is dependent on binding of ATP.

Its subcellular location is the cytoplasm. The enzyme catalyses ATP-dependent cleavage of peptide bonds with broad specificity.. Allosterically activated by HslU binding. Functionally, protease subunit of a proteasome-like degradation complex believed to be a general protein degrading machinery. The protein is ATP-dependent protease subunit HslV of Leptothrix cholodnii (strain ATCC 51168 / LMG 8142 / SP-6) (Leptothrix discophora (strain SP-6)).